The sequence spans 446 residues: tRNA-2-methylthio-N(6)-dimethylallyladenosine synthase (446 aa).

The MTTase N-terminal domain maps to 2-122; the sequence is KKAYVKSYGC…LPDLLRQSRE (121 aa). Residues Cys-11, Cys-47, Cys-85, Cys-157, Cys-161, and Cys-164 each coordinate [4Fe-4S] cluster. One can recognise a Radical SAM core domain in the interval 143–375; sequence RNRGVTGFLT…QDLLDRQRHA (233 aa). The TRAM domain maps to 378–440; that stretch reads AASVGTLTEI…SNSLFGEALE (63 aa).

The protein belongs to the methylthiotransferase family. MiaB subfamily. Monomer. Requires [4Fe-4S] cluster as cofactor.

Its subcellular location is the cytoplasm. It catalyses the reaction N(6)-dimethylallyladenosine(37) in tRNA + (sulfur carrier)-SH + AH2 + 2 S-adenosyl-L-methionine = 2-methylsulfanyl-N(6)-dimethylallyladenosine(37) in tRNA + (sulfur carrier)-H + 5'-deoxyadenosine + L-methionine + A + S-adenosyl-L-homocysteine + 2 H(+). In terms of biological role, catalyzes the methylthiolation of N6-(dimethylallyl)adenosine (i(6)A), leading to the formation of 2-methylthio-N6-(dimethylallyl)adenosine (ms(2)i(6)A) at position 37 in tRNAs that read codons beginning with uridine. This is tRNA-2-methylthio-N(6)-dimethylallyladenosine synthase from Methylorubrum extorquens (strain CM4 / NCIMB 13688) (Methylobacterium extorquens).